The sequence spans 146 residues: Leghemoglobin-3 (146 aa).

Residues 2 to 146 (GFTDKQEALV…LATAIKKAMV (145 aa)) enclose the Globin domain. Tyr29 carries the nitrated tyrosine modification. Residue Ser44 coordinates heme b. Ser44 carries the phosphoserine modification. His61 is a binding site for O2. The heme b site is built by Lys64, His93, and Lys96. Position 134 is a nitrated tyrosine (Tyr134).

It belongs to the plant globin family. Monomer. In terms of processing, nitrated in effective nodules and particularly in hypoxic conditions; this mechanism may play a protective role in the symbiosis by buffering toxic peroxynitrite NO(2)(-). Nitration level decrease during nodule senescence. Phosphorylation at Ser-44 disrupts the molecular environment of its porphyrin ring oxygen binding pocket, thus leading to a reduced oxygen consumption and to the delivery of oxygen O(2) to symbiosomes. Root nodules.

Its subcellular location is the cytoplasm. The protein localises to the cytosol. It is found in the nucleus. Leghemoglobin that reversibly binds oxygen O(2) through a pentacoordinated heme iron. In root nodules, facilitates the diffusion of oxygen to the bacteroids while preventing the bacterial nitrogenase from being inactivated by buffering dioxygen, nitric oxide and carbon monoxide, and promoting the formation of reactive oxygen species (ROS, e.g. H(2)O(2)). This role is essential for symbiotic nitrogen fixation (SNF). The chain is Leghemoglobin-3 from Medicago sativa (Alfalfa).